The sequence spans 24 residues: Superoxide dismutase [Cu-Zn] (24 aa).

This sequence belongs to the Cu-Zn superoxide dismutase family. As to quaternary structure, homodimer. It depends on Cu cation as a cofactor. Requires Zn(2+) as cofactor.

The protein resides in the cytoplasm. It carries out the reaction 2 superoxide + 2 H(+) = H2O2 + O2. Its function is as follows. Destroys radicals which are normally produced within the cells and which are toxic to biological systems. The sequence is that of Superoxide dismutase [Cu-Zn] (sod1) from Aquarana catesbeiana (American bullfrog).